A 2188-amino-acid polypeptide reads, in one-letter code: MTAATPDRRAIITEALHKIDDLTARLEIAEKSSSEPIAVIGMGCRFPGGVNNPEQFWDLLCAGRSGIVRVPAQRWDADAYYCDDHTVPGTICSTEGGFLTSWQPDEFDAEFFSISPREAAAMDPQQRLLIEVAWEALEDAGVPQHTIRGTQTSVFVGVTAYDYMLTLAGRLRPVDLDAYIPTGNSANFAAGRLAYILGARGPAVVIDTACSSSLVAVHLACQSLRGRESDMALVGGTNLLLSPGPSIACSRWGMLSPEGRCKTFDASADGYVRGEGAAVVVLKRLDDAVRDGNRILAVVRGSAVNQDGASSGVTVPNGPAQQALLAKALTSSKLTAADIDYVEAHGTGTPLGDPIELDSLSKVFSDRAGSDQLVIGSVKTNLGHLEAAAGVAGLMKAVLAVHNGYIPRHLNFHQLTPHASEAASRLRIAADGIDWPTTGRPRRAGVSSFGVSGTNAHVVIEQAPDPMAAAGTEPQRGPVPAVSTLVVFGKTAPRVAATASVLADWLDGPGAAVPLADVAHTLNHHRARQTRFGTVAAVDRRQAVIGLRALAAGQSAPGVVAPREGSIGGGTVFVYSGRGSQWAGMGRQLLADEPAFAAAIAELEPEFVAQGGFSLRDVIAGGKELVGIEQIQLGLIGMQLALTALWRSYGVTPDAVIGHSMGEVAAAVVAGALTPAQGLRVTAVRSRLMAPLSGQGTMALLELDAEATEALIADYPEVSLGIYASPRQTVISGPPLLIDELIDKVRQQNGFATRVNIEVAPHNPAMDALQPAMRSELADLTPQPPTIPIISTTYADLGISLGSGPRFDAEHWATNMRNPVRFHQAIAHAGADHHTFIEISAHPLLTHSISDTLRASYDVDNYLSIGTLQRDAHDTLEFHTNLNTTHTTHPPQTPHPPEPHPVLPTTPWQHTQHWITATSAAYHRPDTHPLLGVGVTDPTNGTRVWESELDPDLLWLADHVIDDLVVLPGAAYAEIALAAATDTFAVEQDQPWMISELDLRQMLHVTPGTVLVTTLTGDEQRCQVEIRTRSGSSGWTTHATATVARAEPLAPLDHEGQRREVTTADLEDQLDPDDLYQRLRGAGQQHGPAFQGIVGLAVTQAGVARAQVRLPASARTGSREFMLHPVMMDIALQTLGATRTATDLAGGQDARQGPSSNSALVVPVRFAGVHVYGDITRGVRAVGSLAAAGDRLVGEVVLTDANGQPLLVVDEVEMAVLGSGSGATELTNRLFMLEWEPAPLEKTAEATGALLLIGDPAAGDPLLPALQSSLRDRITDLELASAADEATLRAAISRTSWDGIVVVCPPRANDESMPDEAQLELARTRTLLVASVVETVTRMGARKSPRLWIVTRGAAQFDAGESVTLAQTGLRGIARVLTFEHSELNTTLVDIEPDGTGSLAALAEELLAGSEADEVALRDGQRYVNRLVPAPTTTSGDLAAEARHQVVNLDSSGASRAAVRLQIDQPGRLDALNVHEVKRGRPQGDQVEVRVVAAGLNFSDVLKAMGVYPGLDGAAPVIGGECVGYVTAIGDEVDGVEVGQRVIAFGPGTFGTHLGTIADLVVPIPDTLADNEAATFGVAYLTAWHSLCEVGRLSPGERVLIHSATGGVGMAAVSIAKMIGARIYTTAGSDAKREMLSRLGVEYVGDSRSVDFADEILELTDGYGVDVVLNSLAGEAIQRGVQILAPGGRFIELGKKDVYADASLGLAALAKSASFSVVDLDLNLKLQPARYRQLLQHILQHVADGKLEVLPVTAFSLHDAADAFRLMASGKHTGKIVISIPQHGSIEAIAAPPPLPLVSRDGGYLIVGGMGGLGFVVARWLAEQGAGLIVLNGRSAPSDEVAAAIAELNASGSRIEVITGDITEPDTAERLVRAVEDAGFRLAGVVHSAMVLADEIVLNMTDSAARRVFAPKVTGSWRLHVATAARDVDWWLTFSSAAALLGTPGQGAYAAANSWVDGLVAHRRSAGLPAVGINWGPWADVGRAQFFKDLGVEMINAEQGLAAMQAVLTADRGRTGVFSLDARQWFQSFPAVAGSSLFAKLHDSAARKSGQRRGGGAIRAQLDALDAAERPGHLASAIADEIRAVLRSGDPIDHHRPLETLGLDSLMGLELRNRLEASLGITLPVALVWAYPTISDLATALCERMDYATPAAAQEISDTEPELSDEEMDLLADLVDASELEAATRGES.

Residues 34–462 enclose the Ketosynthase family 3 (KS3) domain; the sequence is SEPIAVIGMG…GTNAHVVIEQ (429 aa). Residues C210, H345, and H384 each act as for beta-ketoacyl synthase activity in the active site. The tract at residues 572-890 is acyltransferase; sequence VFVYSGRGSQ…NLNTTHTTHP (319 aa). The For malonyltransferase activity role is filled by S660. Residues 928-1050 are N-terminal hotdog fold; sequence HPLLGVGVTD…ATVARAEPLA (123 aa). Positions 928-1093 are dehydratase; that stretch reads HPLLGVGVTD…QQHGPAFQGI (166 aa). Positions 928–1223 constitute a PKS/mFAS DH domain; the sequence is HPLLGVGVTD…MAVLGSGSGA (296 aa). H959 serves as the catalytic Proton acceptor; for dehydratase activity. The C-terminal hotdog fold stretch occupies residues 1067-1223; that stretch reads EDQLDPDDLY…MAVLGSGSGA (157 aa). D1129 functions as the Proton donor; for dehydratase activity in the catalytic mechanism. The segment at 1467–1778 is enoylreductase; sequence GRLDALNVHE…SGKHTGKIVI (312 aa). The segment at 1802 to 1981 is beta-ketoacyl reductase; that stretch reads GGYLIVGGMG…GINWGPWADV (180 aa). Residue 1803–1848 participates in NADP(+) binding; sequence GYLIVGGMGGLGFVVARWLAEQGAGLIVLNGRSAPSDEVAAAIAEL. The Carrier domain maps to 2069–2145; the sequence is ERPGHLASAI…DLATALCERM (77 aa). The residue at position 2105 (S2105) is an O-(pantetheine 4'-phosphoryl)serine.

As to quaternary structure, homodimer. The cofactor is NADP(+). Pantetheine 4'-phosphate is required as a cofactor.

The catalysed reaction is icosanoyl-[(phenol)carboxyphthiodiolenone synthase] + 2 (S)-methylmalonyl-CoA + 3 malonyl-CoA + 5 NADPH + 10 H(+) = C32-carboxyphthiodiolenone-[(phenol)carboxyphthiodiolenone synthase] + 5 CO2 + 5 NADP(+) + 5 CoA + 2 H2O. It catalyses the reaction docosanoyl-[(phenol)carboxyphthiodiolenone synthase] + 2 (S)-methylmalonyl-CoA + 3 malonyl-CoA + 5 NADPH + 10 H(+) = C34-carboxyphthiodiolenone-[(phenol)carboxyphthiodiolenone synthase] + 5 CO2 + 5 NADP(+) + 5 CoA + 2 H2O. The enzyme catalyses 17-(4-hydroxyphenyl)heptadecanoyl-[(phenol)carboxyphthiodiolenone synthase] + 2 (S)-methylmalonyl-CoA + 3 malonyl-CoA + 5 NADPH + 10 H(+) = C35-(phenol)carboxyphthiodiolenone-[(phenol)carboxyphthiodiolenone synthase] + 5 CO2 + 5 NADP(+) + 5 CoA + 2 H2O. It carries out the reaction 19-(4-hydroxyphenyl)nonadecanoyl-[(phenol)carboxyphthiodiolenone synthase] + 2 (S)-methylmalonyl-CoA + 3 malonyl-CoA + 5 NADPH + 10 H(+) = C37-(phenol)carboxyphthiodiolenone-[(phenol)carboxyphthiodiolenone synthase] + 5 CO2 + 5 NADP(+) + 5 CoA + 2 H2O. It functions in the pathway lipid metabolism; fatty acid biosynthesis. In terms of biological role, part of the PpsABCDE complex involved in the biosynthesis of the lipid core common to phthiocerols and phenolphthiocerols by successive additions of malonyl-CoA or methylmalonyl-CoA extender units. PpsA can accept as substrate the activated forms of either icosanoyl (C20), docosanoyl (C22) or lignoceroyl (C24) groups from FadD26, or a (4-hydroxyphenyl)-C17 or (4-hydroxyphenyl)-C19 fatty acyl from FadD29. PpsA initiates the biosynthesis and extends its substrate using a malonyl-CoA extender unit. The PpsB and PpsC proteins add the second and third malonyl-CoA extender units. PpsD adds an (R)-methylmalonyl unit and PpsE adds a second (R)-methylmalonyl unit. The incorporation of the methylmalonyl units results in formation of two branched methyl groups in the elongated product. The chain is Phenolphthiocerol/phthiocerol polyketide synthase subunit C (ppsC) from Mycobacterium bovis (strain ATCC BAA-935 / AF2122/97).